The primary structure comprises 305 residues: J domain-containing protein 1 (305 aa).

The J domain occupies 91–163 (TPYEVLGLVK…SRRRMYDMYA (73 aa)). The chain crosses the membrane as a helical span at residues 212 to 232 (WGMVVWALCMLAGFQVMAFLI).

This sequence belongs to the DnaJ family.

The protein localises to the mitochondrion membrane. Its function is as follows. Probable chaperone. This Eremothecium gossypii (strain ATCC 10895 / CBS 109.51 / FGSC 9923 / NRRL Y-1056) (Yeast) protein is J domain-containing protein 1 (JID1).